We begin with the raw amino-acid sequence, 46 residues long: Photosystem II reaction center protein K (46 aa).

The propeptide occupies 1-9 (MLILLNTFA). A helical transmembrane segment spans residues 25–45 (LPLIPLFFFLLVFVWQAAVGF).

Belongs to the PsbK family. PSII is composed of 1 copy each of membrane proteins PsbA, PsbB, PsbC, PsbD, PsbE, PsbF, PsbH, PsbI, PsbJ, PsbK, PsbL, PsbM, PsbT, PsbX, PsbY, Psb30/Ycf12, peripheral proteins PsbO, CyanoQ (PsbQ), PsbU, PsbV and a large number of cofactors. It forms dimeric complexes.

The protein resides in the cellular thylakoid membrane. In terms of biological role, one of the components of the core complex of photosystem II (PSII). PSII is a light-driven water:plastoquinone oxidoreductase that uses light energy to abstract electrons from H(2)O, generating O(2) and a proton gradient subsequently used for ATP formation. It consists of a core antenna complex that captures photons, and an electron transfer chain that converts photonic excitation into a charge separation. The chain is Photosystem II reaction center protein K from Prochlorococcus marinus (strain MIT 9215).